A 127-amino-acid chain; its full sequence is Succinate dehydrogenase cytochrome b560 subunit (127 aa).

Transmembrane regions (helical) follow at residues 36 to 53 (VGLA…RIIL) and 60 to 83 (NLLT…FILL). Residue H88 participates in heme binding. A helical transmembrane segment spans residues 109-126 (LSKFSLFLLVSLSLILIF).

It belongs to the cytochrome b560 family. As to quaternary structure, forms part of complex II containing four subunits: a 70 kDa flavoprotein (FP), a 27 kDa iron-sulfur protein (IP), a cytochrome B and a membrane-anchoring protein. The cofactor is heme.

It localises to the mitochondrion inner membrane. The protein operates within carbohydrate metabolism; tricarboxylic acid cycle. In terms of biological role, membrane-anchoring subunit of succinate dehydrogenase (SDH) that is involved in complex II of the mitochondrial electron transport chain and is responsible for transferring electrons from succinate to ubiquinone (coenzyme Q). In Chondrus crispus (Carrageen Irish moss), this protein is Succinate dehydrogenase cytochrome b560 subunit (SDH3).